The chain runs to 142 residues: Ribosome-binding factor A (142 aa).

Basic and acidic residues predominate over residues glutamate 120–alanine 130. A disordered region spans residues glutamate 120–glutamine 142. The span at glutamate 131–glutamine 142 shows a compositional bias: acidic residues.

Belongs to the RbfA family. As to quaternary structure, monomer. Binds 30S ribosomal subunits, but not 50S ribosomal subunits or 70S ribosomes.

Its subcellular location is the cytoplasm. One of several proteins that assist in the late maturation steps of the functional core of the 30S ribosomal subunit. Associates with free 30S ribosomal subunits (but not with 30S subunits that are part of 70S ribosomes or polysomes). Required for efficient processing of 16S rRNA. May interact with the 5'-terminal helix region of 16S rRNA. This chain is Ribosome-binding factor A, found in Paramagnetospirillum magneticum (strain ATCC 700264 / AMB-1) (Magnetospirillum magneticum).